We begin with the raw amino-acid sequence, 702 residues long: Ribosomal RNA large subunit methyltransferase K/L (702 aa).

A THUMP domain is found at 43–154 (LVYQSLMWSR…KETASIALDL (112 aa)).

The protein belongs to the methyltransferase superfamily. RlmKL family.

It is found in the cytoplasm. It carries out the reaction guanosine(2445) in 23S rRNA + S-adenosyl-L-methionine = N(2)-methylguanosine(2445) in 23S rRNA + S-adenosyl-L-homocysteine + H(+). The enzyme catalyses guanosine(2069) in 23S rRNA + S-adenosyl-L-methionine = N(2)-methylguanosine(2069) in 23S rRNA + S-adenosyl-L-homocysteine + H(+). In terms of biological role, specifically methylates the guanine in position 2445 (m2G2445) and the guanine in position 2069 (m7G2069) of 23S rRNA. The chain is Ribosomal RNA large subunit methyltransferase K/L from Escherichia coli O1:K1 / APEC.